A 540-amino-acid chain; its full sequence is Chaperonin GroEL (540 aa).

Residues 29-32 (TLGP), 86-90 (DGTTT), glycine 413, 477-479 (DAL), and aspartate 493 contribute to the ATP site.

This sequence belongs to the chaperonin (HSP60) family. In terms of assembly, forms a cylinder of 14 subunits composed of two heptameric rings stacked back-to-back. Interacts with the co-chaperonin GroES.

The protein resides in the cytoplasm. The enzyme catalyses ATP + H2O + a folded polypeptide = ADP + phosphate + an unfolded polypeptide.. Functionally, together with its co-chaperonin GroES, plays an essential role in assisting protein folding. The GroEL-GroES system forms a nano-cage that allows encapsulation of the non-native substrate proteins and provides a physical environment optimized to promote and accelerate protein folding. This chain is Chaperonin GroEL, found in Clostridium botulinum (strain Alaska E43 / Type E3).